We begin with the raw amino-acid sequence, 712 residues long: Rap1 GTPase-activating protein 2 (712 aa).

The interval 1–33 (MLAGLKVKKQELANSSDVTLPDRPLSPPLTAPP) is disordered. Ser26 carries the phosphoserine modification. Thr30 carries the post-translational modification Phosphothreonine. The 217-residue stretch at 229 to 445 (IVSYDEHDVN…RTRAALLDNL (217 aa)) folds into the Rap-GAP domain. Residues Ser488, Ser495, Ser525, Ser539, Ser545, Ser593, and Ser594 each carry the phosphoserine modification. Positions 529 to 712 (AAATAKNQSR…LSHASSSAGH (184 aa)) are disordered. Polar residues predominate over residues 566-594 (DSASSTPKTPDGGHSSQEIKSETSSNPSS). The span at 599–612 (PNKEKPFIKLKENG) shows a compositional bias: basic and acidic residues. Residues 617-629 (SRSSSSTSSFSST) are compositionally biased toward low complexity. Positions 641–652 (SGSSQPSTTSPF) are enriched in polar residues. A compositionally biased stretch (low complexity) spans 660 to 669 (SPSPSSESPS). Over residues 681 to 694 (RSPTDAKSRNSPRS) the composition is skewed to polar residues.

It is found in the cytoplasm. GTPase activator for the nuclear Ras-related regulatory protein RAP-1A (KREV-1), converting it to the putatively inactive GDP-bound state. The polypeptide is Rap1 GTPase-activating protein 2 (Rap1gap2) (Mus musculus (Mouse)).